Here is a 643-residue protein sequence, read N- to C-terminus: Cytoplasmic dynein 1 intermediate chain 1 (643 aa).

2 stretches are compositionally biased toward basic and acidic residues: residues 1-13 (MSDK…ELER) and 20-60 (QIRE…RETE). 2 disordered regions span residues 1–65 (MSDK…LLQS) and 96–123 (MSPS…RTLQ). Ser-2 carries the post-translational modification N-acetylserine. Residues 2–123 (SDKSDLKAEL…DLGPLTRTLQ (122 aa)) are interaction with DCTN1. 2 positions are modified to phosphoserine: Ser-50 and Ser-100. Residues 96-107 (MSPSSKSVSTPS) show a composition bias toward low complexity. At Thr-105 the chain carries Phosphothreonine. A phosphoserine mark is found at Ser-107 and Ser-111. Positions 145–161 (KLGVSKVTQVDFLPREV) are interaction with DYNLT1. The interval 167 to 219 (ETQTPLATHQSEEDEEDEEMVEPKVGHDSELENQDKKQETKEAPPRELTEEEK) is disordered. Phosphothreonine is present on Thr-174. 2 positions are modified to phosphoserine: Ser-177 and Ser-195. Residues 187-219 (VEPKVGHDSELENQDKKQETKEAPPRELTEEEK) are compositionally biased toward basic and acidic residues. 7 WD repeats span residues 283–332 (SKHR…TTPE), 336–376 (HCQS…RTPV), 385–426 (AHTH…TPQE), 435–475 (SKPV…AGIG), 480–525 (GHQG…PLYS), 528–568 (DNAD…EVPT), and 574–613 (EGAY…VPHN). A Phosphoserine modification is found at Ser-633.

This sequence belongs to the dynein intermediate chain family. Homodimer. The cytoplasmic dynein 1 complex consists of two catalytic heavy chains (HCs) and a number of non-catalytic subunits presented by intermediate chains (ICs), light intermediate chains (LICs) and light chains (LCs); the composition seems to vary in respect to the IC, LIC and LC composition. The heavy chain homodimer serves as a scaffold for the probable homodimeric assembly of the respective non-catalytic subunits. The ICs and LICs bind directly to the HC dimer and the LCs assemble on the IC dimer. Isoform 1, isoform 2 and isoform 3 interact with DYNC1H1. Isoform 1, isoform 2 and isoform 3 interact with DYNLT3. Isoform 1, isoform 2 and isoform 3 interact with DYNLT1. Interacts with DCTN1. Interacts with MCRS1; the interaction is required for the proper distribution of centriolar satellites. High levels seen in the brain and testis, while a lower level expression is seen in the liver, spleen, kidney, lung, skeletal muscle and heart.

It is found in the cytoplasm. It localises to the chromosome. The protein localises to the centromere. The protein resides in the kinetochore. Its subcellular location is the cytoskeleton. It is found in the spindle pole. Its function is as follows. Acts as one of several non-catalytic accessory components of the cytoplasmic dynein 1 complex that are thought to be involved in linking dynein to cargos and to adapter proteins that regulate dynein function. Cytoplasmic dynein 1 acts as a motor for the intracellular retrograde motility of vesicles and organelles along microtubules. The intermediate chains mediate the binding of dynein to dynactin via its 150 kDa component (p150-glued) DCTN1. May play a role in mediating the interaction of cytoplasmic dynein with membranous organelles and kinetochores. The chain is Cytoplasmic dynein 1 intermediate chain 1 (Dync1i1) from Rattus norvegicus (Rat).